A 93-amino-acid polypeptide reads, in one-letter code: MISSNYSYPLDPSWNTEDITKVLRFLNQVEHAYENSIKVDDLLDSYKEFKKVVKSKAQEKQIDREFQRTSGYSTYQAVKAAQQQAKGFISLGR.

This sequence belongs to the UPF0223 family.

This is UPF0223 protein SAG0995 from Streptococcus agalactiae serotype V (strain ATCC BAA-611 / 2603 V/R).